The sequence spans 193 residues: Ion-translocating oxidoreductase complex subunit A (193 aa).

6 consecutive transmembrane segments (helical) span residues 5–25, 47–67, 72–92, 102–122, 134–154, and 167–187; these read ILFF…FLGL, FVIL…LLPL, LRII…EIVL, LLGI…IPLF, IFYG…FSCI, and FQGA…FMGF.

This sequence belongs to the NqrDE/RnfAE family. The complex is composed of six subunits: RnfA, RnfB, RnfC, RnfD, RnfE and RnfG.

The protein localises to the cell inner membrane. In terms of biological role, part of a membrane-bound complex that couples electron transfer with translocation of ions across the membrane. In Buchnera aphidicola subsp. Acyrthosiphon pisum (strain APS) (Acyrthosiphon pisum symbiotic bacterium), this protein is Ion-translocating oxidoreductase complex subunit A.